The sequence spans 644 residues: DNA mismatch repair protein MutL (644 aa).

The disordered stretch occupies residues 363-405 (GTFNPFTDDKTNQHYTKAGSGSGSGYSSGSSSSSGSGSGSSYS). Over residues 389 to 405 (SSGSSSSSGSGSGSSYS) the composition is skewed to low complexity.

It belongs to the DNA mismatch repair MutL/HexB family.

Its function is as follows. This protein is involved in the repair of mismatches in DNA. It is required for dam-dependent methyl-directed DNA mismatch repair. May act as a 'molecular matchmaker', a protein that promotes the formation of a stable complex between two or more DNA-binding proteins in an ATP-dependent manner without itself being part of a final effector complex. This is DNA mismatch repair protein MutL from Flavobacterium johnsoniae (strain ATCC 17061 / DSM 2064 / JCM 8514 / BCRC 14874 / CCUG 350202 / NBRC 14942 / NCIMB 11054 / UW101) (Cytophaga johnsonae).